Reading from the N-terminus, the 202-residue chain is Superoxide dismutase [Mn] (202 aa).

His27 provides a ligand contact to Mn(2+). Residues Thr34 and Thr70 each carry the phosphothreonine modification. Mn(2+) is bound by residues His82, Asp164, and His168.

It belongs to the iron/manganese superoxide dismutase family. In terms of assembly, homodimer. It depends on Mn(2+) as a cofactor.

It carries out the reaction 2 superoxide + 2 H(+) = H2O2 + O2. Its function is as follows. Destroys superoxide anion radicals which are normally produced within the cells and which are toxic to biological systems. This is Superoxide dismutase [Mn] (sodA) from Halalkalibacterium halodurans (strain ATCC BAA-125 / DSM 18197 / FERM 7344 / JCM 9153 / C-125) (Bacillus halodurans).